The primary structure comprises 605 residues: Ras guanine nucleotide exchange factor A (605 aa).

The LisH domain maps to 67–99 (DKTAIIQLILQHLSTKGLKQTKQTLEKEARTTT). Positions 198–320 (DDEVVKFASL…SLTKMVEKLS (123 aa)) constitute an N-terminal Ras-GEF domain. The 245-residue stretch at 353-597 (DEEEIARQLT…YRESLKREPK (245 aa)) folds into the Ras-GEF domain.

As to quaternary structure, component of the Sca1 complex composed of at least gefA, gefH, scaA, phr, and the protein phosphatase 2A subunits pppA and pho2B. Interacts directly with gefH.

It is found in the cell membrane. Its function is as follows. Ras-bound GDP/GTP exchange factor required for normal activation of adenylyl cyclase. Component of the Sca1 complex, a regulator of cell motility, chemotaxis and signal relay. The Sca1 complex is recruited to the plasma membrane in a chemoattractant- and F-actin-dependent manner and is enriched at the leading edge of chemotaxing cells where it regulates F-actin dynamics and signal relay by controlling the activation of rasC and the downstream target of rapamycin complex 2 (TORC2)-Akt/protein kinase B (PKB) pathway. The polypeptide is Ras guanine nucleotide exchange factor A (gefA) (Dictyostelium discoideum (Social amoeba)).